A 217-amino-acid chain; its full sequence is Adenylate kinase (217 aa).

10 to 15 (GIGKGT) lines the ATP pocket. An NMP region spans residues 30 to 59 (STGDIFRKNFKENTELGTLSKKFIAQGLLV). AMP-binding positions include T31, R36, 57 to 59 (LLV), 85 to 88 (GFPR), and Q92. The tract at residues 126 to 163 (GRRICPECGKVYHIEKIPPKNPGICDKDQKTLIQREDD) is LID. An ATP-binding site is contributed by R127. The Zn(2+) site is built by C130 and C133. Residue 136-137 (VY) coordinates ATP. Residues C150 and D153 each coordinate Zn(2+). Residues R160 and R171 each coordinate AMP. Q199 contributes to the ATP binding site.

It belongs to the adenylate kinase family. In terms of assembly, monomer.

The protein resides in the cytoplasm. The enzyme catalyses AMP + ATP = 2 ADP. Its pathway is purine metabolism; AMP biosynthesis via salvage pathway; AMP from ADP: step 1/1. Catalyzes the reversible transfer of the terminal phosphate group between ATP and AMP. Plays an important role in cellular energy homeostasis and in adenine nucleotide metabolism. In Aster yellows witches'-broom phytoplasma (strain AYWB), this protein is Adenylate kinase.